Consider the following 61-residue polypeptide: Lens epithelial cell protein LEP503 (61 aa).

This Mus musculus (Mouse) protein is Lens epithelial cell protein LEP503 (Lenep).